The chain runs to 377 residues: Succinyl-diaminopimelate desuccinylase 2 (377 aa).

A Zn(2+)-binding site is contributed by His62. Asp64 is a catalytic residue. Residue Asp95 coordinates Zn(2+). The active-site Proton acceptor is Glu129. Positions 130, 158, and 350 each coordinate Zn(2+).

It belongs to the peptidase M20A family. DapE subfamily. As to quaternary structure, homodimer. It depends on Zn(2+) as a cofactor. The cofactor is Co(2+).

The enzyme catalyses N-succinyl-(2S,6S)-2,6-diaminopimelate + H2O = (2S,6S)-2,6-diaminopimelate + succinate. It participates in amino-acid biosynthesis; L-lysine biosynthesis via DAP pathway; LL-2,6-diaminopimelate from (S)-tetrahydrodipicolinate (succinylase route): step 3/3. Functionally, catalyzes the hydrolysis of N-succinyl-L,L-diaminopimelic acid (SDAP), forming succinate and LL-2,6-diaminopimelate (DAP), an intermediate involved in the bacterial biosynthesis of lysine and meso-diaminopimelic acid, an essential component of bacterial cell walls. This is Succinyl-diaminopimelate desuccinylase 2 from Shewanella loihica (strain ATCC BAA-1088 / PV-4).